Here is a 77-residue protein sequence, read N- to C-terminus: MGRSFYHFLMTYRDPKLTDQKTEFANNAYRDHSFPKQTRNYHILCDYLEFNAPYLPGMSIFDELWEAYLLDEEKNKH.

This sequence belongs to the UPF0346 family.

This chain is UPF0346 protein lin1971, found in Listeria innocua serovar 6a (strain ATCC BAA-680 / CLIP 11262).